We begin with the raw amino-acid sequence, 141 residues long: Zinc finger protein 593 homolog (141 aa).

Residues 1-32 (MGRYSGHGGTHTKKKQYKRARSTKNRAKDIDQ) form a disordered region. Positions 10 to 25 (THTKKKQYKRARSTKN) are enriched in basic residues. A C2H2-type zinc finger spans residues 60–84 (NYCIHCSKHFVTNEDLQSHIKGKPH).

It belongs to the ZNF593/BUD20 C2H2-type zinc-finger protein family. In terms of assembly, associates with pre-60S ribosomal particles; released from the pre-60S particle very early in the cytoplasm.

The protein resides in the nucleus. The protein localises to the cytoplasm. In terms of biological role, involved in pre-60S ribosomal particles maturation by promoting the nuclear export of the 60S ribosome. This chain is Zinc finger protein 593 homolog, found in Dictyostelium discoideum (Social amoeba).